The primary structure comprises 416 residues: MLRMAPKTVGAVRNLNIHEWQSKQLIQKYGGRAQSGEVAFSPERSRDIAKKLWNQFPGCKFVVKAQVLAGGRGKGHWEHGMQGGVKLAKTPEEVYEIANEMIGHKLITKQTGAKGINCNKVMVCGAVKILKEFYLSILLDRAMGCPVIIATSQGGMGIEEVAQKCPECLFKVPISVKNGPTNEQLVKLAKDLGLEGDLVQDCVDNVKALYQVFDKCDSTMVEINPLGVIETPTDEKVICCLDAKIAFDKDAAFRQKEIFALRDKSREDPRDVRASLADLNYVGLDGDIGCMVNGAGLAMATMDTINYFGGSAANFLDVGGNAKKEQITEALRILNSDKHVKSILINIFGGIMRCDVVAQGIMDAVREMKLDLPLVVRLEGTNVAKGKEILKSSGLNIIPANDLGDAAKKAVASLKH.

The N-terminal 14 residues, 1-14 (MLRMAPKTVGAVRN), are a transit peptide targeting the hydrogenosome. ATP is bound by residues Lys-64, 71–73 (GRG), and Glu-132. Positions 224 and 242 each coordinate Mg(2+). Substrate-binding positions include Asn-293 and 350 to 352 (GIM).

It belongs to the succinate/malate CoA ligase beta subunit family. As to quaternary structure, heterodimer of an alpha and a beta subunit. Mg(2+) serves as cofactor.

The protein localises to the hydrogenosome. It carries out the reaction succinate + ATP + CoA = succinyl-CoA + ADP + phosphate. The protein operates within carbohydrate metabolism; tricarboxylic acid cycle; succinate from succinyl-CoA (ligase route): step 1/1. In terms of biological role, succinyl-CoA synthetase functions in the citric acid cycle (TCA), coupling the hydrolysis of succinyl-CoA to the synthesis of ATP and thus represents the only step of substrate-level phosphorylation in the TCA. The beta subunit provides nucleotide specificity of the enzyme and binds the substrate succinate, while the binding sites for coenzyme A and phosphate are found in the alpha subunit. This chain is Succinate--CoA ligase [ADP-forming] subunit beta (SCSb), found in Blastocystis sp. subtype 1 (strain ATCC 50177 / NandII).